We begin with the raw amino-acid sequence, 72 residues long: MKLSIFAAIFMAFVSLNQVFGSMTHSVKSKEAIISADESLVKPIDAGQAQPEGCPVCARLGVLCPYHYRADS.

A signal peptide spans Met1 to Gly21.

It belongs to the CPGH1 family.

It localises to the secreted. The protein resides in the host cell. Its subcellular location is the host cytoplasm. It is found in the host nucleus. Functionally, rust effector delivered into infected tissues to modulate host functions and contribute to pathogen virulence. Enhances leaf colonization by the bacteria Pseudomonas syringae and the oomycete Hyaloperonospora arabidopsidis pathogens in an Arabidopsis thaliana infection model. This is Candidate secreted effector protein MPL124499 from Melampsora larici-populina (strain 98AG31 / pathotype 3-4-7) (Poplar leaf rust fungus).